Consider the following 1042-residue polypeptide: FHIP family protein AAEL005291 (1042 aa).

Residues 1–14 (MSWLRSSPLRQSFS) show a composition bias toward polar residues. 4 disordered regions span residues 1-31 (MSWL…GGNS), 494-514 (NNTS…PQGG), 821-866 (PHSG…KRND), and 905-977 (SNSS…GSPH). The segment covering 839-859 (VSMTSNLSQTTPMQLTPSSSY) has biased composition (polar residues). 2 stretches are compositionally biased toward low complexity: residues 905–940 (SNSS…FMGS) and 956–976 (PSIG…TGSP).

The protein belongs to the FHIP family.

This is FHIP family protein AAEL005291 from Aedes aegypti (Yellowfever mosquito).